Consider the following 177-residue polypeptide: MSEFATVARPYAKAAFDFAVEKQSLEQWQNMLAFTAEVTRNEQVGELLSGSLASETLANTFIAICGEQVDEHAQNFIRVMAENGRLLALPEVLQQFIQLRASLESTVDVEVISATELREQQLAKISVAMEKRLSRKVKLNCKIDKSVIAGVVVRAGDLVIDGSIRGRLDRLTDVLQS.

The protein belongs to the ATPase delta chain family. F-type ATPases have 2 components, F(1) - the catalytic core - and F(0) - the membrane proton channel. F(1) has five subunits: alpha(3), beta(3), gamma(1), delta(1), epsilon(1). F(0) has three main subunits: a(1), b(2) and c(10-14). The alpha and beta chains form an alternating ring which encloses part of the gamma chain. F(1) is attached to F(0) by a central stalk formed by the gamma and epsilon chains, while a peripheral stalk is formed by the delta and b chains.

Its subcellular location is the cell inner membrane. F(1)F(0) ATP synthase produces ATP from ADP in the presence of a proton or sodium gradient. F-type ATPases consist of two structural domains, F(1) containing the extramembraneous catalytic core and F(0) containing the membrane proton channel, linked together by a central stalk and a peripheral stalk. During catalysis, ATP synthesis in the catalytic domain of F(1) is coupled via a rotary mechanism of the central stalk subunits to proton translocation. Its function is as follows. This protein is part of the stalk that links CF(0) to CF(1). It either transmits conformational changes from CF(0) to CF(1) or is implicated in proton conduction. The chain is ATP synthase subunit delta from Photorhabdus laumondii subsp. laumondii (strain DSM 15139 / CIP 105565 / TT01) (Photorhabdus luminescens subsp. laumondii).